Here is a 73-residue protein sequence, read N- to C-terminus: Translational regulator CsrA (73 aa).

This sequence belongs to the CsrA/RsmA family. Homodimer; the beta-strands of each monomer intercalate to form a hydrophobic core, while the alpha-helices form wings that extend away from the core.

Its subcellular location is the cytoplasm. In terms of biological role, a translational regulator that binds mRNA to regulate translation initiation and/or mRNA stability. Usually binds in the 5'-UTR at or near the Shine-Dalgarno sequence preventing ribosome-binding, thus repressing translation. Its main target seems to be the major flagellin gene, while its function is anatagonized by FliW. This chain is Translational regulator CsrA, found in Lachnospira eligens (strain ATCC 27750 / DSM 3376 / VPI C15-48 / C15-B4) (Eubacterium eligens).